A 275-amino-acid polypeptide reads, in one-letter code: tRNA (guanine-N(1)-)-methyltransferase (275 aa).

S-adenosyl-L-methionine-binding positions include Gly-124 and 149 to 154; that span reads IGDYVL.

The protein belongs to the RNA methyltransferase TrmD family. Homodimer.

It localises to the cytoplasm. It catalyses the reaction guanosine(37) in tRNA + S-adenosyl-L-methionine = N(1)-methylguanosine(37) in tRNA + S-adenosyl-L-homocysteine + H(+). Functionally, specifically methylates guanosine-37 in various tRNAs. The polypeptide is tRNA (guanine-N(1)-)-methyltransferase (Bifidobacterium animalis subsp. lactis (strain AD011)).